Reading from the N-terminus, the 363-residue chain is Beta-1,3-N-acetylglucosaminyltransferase lunatic fringe (363 aa).

Topologically, residues 1 to 8 (MLKSCGRK) are cytoplasmic. A helical; Signal-anchor for type II membrane protein membrane pass occupies residues 9–29 (LLLSLVGSMFTCLLVLMVEPP). Over 30-363 (GRPGLARGEA…TPWCPSNVVY (334 aa)) the chain is Lumenal. Position 113 (Arg113) interacts with substrate. Residue Asn151 is glycosylated (N-linked (GlcNAc...) asparagine). Intrachain disulfides connect Cys152-Cys163 and Cys181-Cys244. Asp185 contributes to the substrate binding site. Asp186 contributes to the Mn(2+) binding site. Asp274 is a catalytic residue. A Mn(2+)-binding site is contributed by His298. Cys348 and Cys357 are joined by a disulfide.

The protein belongs to the glycosyltransferase 31 family. It depends on Mn(2+) as a cofactor. Co(2+) serves as cofactor. Post-translationally, a soluble form may be derived from the membrane form by proteolytic processing.

It localises to the golgi apparatus membrane. It catalyses the reaction 3-O-(alpha-L-fucosyl)-L-threonyl-[EGF-like domain protein] + UDP-N-acetyl-alpha-D-glucosamine = 3-O-(N-acetyl-beta-D-glucosaminyl-(1-&gt;3)-alpha-L-fucosyl)-L-threonyl-[EGF-like domain protein] + UDP + H(+). The catalysed reaction is 3-O-(alpha-L-fucosyl)-L-seryl-[EGF-like domain protein] + UDP-N-acetyl-alpha-D-glucosamine = 3-O-(N-acetyl-beta-D-glucosaminyl-(1-&gt;3)-alpha-L-fucosyl)-L-seryl-[EGF-like domain protein] + UDP + H(+). Its function is as follows. Glycosyltransferase that initiates the elongation of O-linked fucose residues attached to EGF-like repeats in the extracellular domain of Notch molecules. Essential mediator of somite segmentation and patterning. This Gallus gallus (Chicken) protein is Beta-1,3-N-acetylglucosaminyltransferase lunatic fringe (LFNG).